The following is a 234-amino-acid chain: MSPVPSVTAVQVENVLFPPSVKPPGSTNDLFLGGAGVRGLEIQGKFVKFTAIGVYLESSAVPTLAVKWKGKTVEELADSVDFFRDVVTGPFEKFTKVTTILPLTGRQYSDKVSENCVAFWKSVGIYTDAEAKAIEKFNEVLKDETFPPGNSILFTHSPLGALTMSFSKDGSLPEVGNAVIENKLLTEAVLESIIGKHGVSPEAKKSLAARLSELFCKEAGDEKIEAEKVAPVAC.

Positions 50, 115, and 192 each coordinate substrate.

Belongs to the chalcone isomerase family.

It catalyses the reaction a chalcone = a flavanone.. Its pathway is secondary metabolite biosynthesis; flavonoid biosynthesis. In terms of biological role, catalyzes the intramolecular cyclization of bicyclic chalcones into tricyclic (S)-flavanones. Responsible for the isomerization of 4,2',4',6'-tetrahydroxychalcone (also termed chalcone) into naringenin. This chain is Chalcone--flavanone isomerase 2 (CHI2), found in Vitis vinifera (Grape).